Reading from the N-terminus, the 397-residue chain is DnaJ homolog subfamily A member 4 (397 aa).

Residues 4 to 70 form the J domain; that stretch reads ETQYYDILGV…RDIYDQGGEQ (67 aa). S18 bears the Phosphoserine mark. The segment at 122–206 adopts a CR-type zinc-finger fold; it reads GITKKLALQK…CSGAKVTREK (85 aa). Zn(2+) contacts are provided by C135, C138, C151, C154, C178, C181, C194, and C197. CXXCXGXG motif repeat units lie at residues 135–142, 151–158, 178–185, and 194–201; these read CEKCEGIG, CPLCKGRG, CIECKGQG, and CENCSGAK. The span at 366–380 shows a compositional bias: basic and acidic residues; that stretch reads EFNPNEQSWRQHREA. The disordered stretch occupies residues 366 to 397; sequence EFNPNEQSWRQHREAYEEDDEEPRAGVQCQTA. C394 carries the post-translational modification Cysteine methyl ester. A lipid anchor (S-farnesyl cysteine) is attached at C394. A propeptide spans 395-397 (removed in mature form); it reads QTA.

As to expression, specifically expressed in testis and heart.

Its subcellular location is the membrane. The protein is DnaJ homolog subfamily A member 4 (Dnaja4) of Mus musculus (Mouse).